The primary structure comprises 84 residues: Toxin To5 (84 aa).

The signal sequence occupies residues 1–19 (MKAIIFFIGCLMLIDLVAG). The LCN-type CS-alpha/beta domain maps to 21 to 82 (RSGYPVTQKG…IWGSYPNNCG (62 aa)). 4 cysteine pairs are disulfide-bonded: Cys-31/Cys-81, Cys-35/Cys-57, Cys-43/Cys-62, and Cys-47/Cys-64. Cys-81 is modified (cysteine amide).

Expressed by the venom gland.

It is found in the secreted. Functionally, beta toxins bind voltage-independently at site-4 of sodium channels (Nav) and shift the voltage of activation toward more negative potentials thereby affecting sodium channel activation and promoting spontaneous and repetitive firing. This chain is Toxin To5, found in Tityus obscurus (Amazonian scorpion).